We begin with the raw amino-acid sequence, 339 residues long: Cathepsin B (339 aa).

The first 17 residues, 1 to 17, serve as a signal peptide directing secretion; that stretch reads MWQLWASLCCLLVLANA. Residues 18-79 constitute a propeptide, activation peptide; the sequence is RSRPSFHPLS…QRVMFTEDLK (62 aa). 6 disulfide bridges follow: cysteine 93/cysteine 122, cysteine 105/cysteine 150, cysteine 141/cysteine 207, cysteine 142/cysteine 146, cysteine 179/cysteine 211, and cysteine 187/cysteine 198. Cysteine 108 is a catalytic residue. N-linked (GlcNAc...) asparagine glycosylation is present at asparagine 192. Lysine 220 is modified (N6-acetyllysine). Catalysis depends on residues histidine 278 and asparagine 298. A propeptide spanning residues 334-339 is cleaved from the precursor; the sequence is QYWEKI.

The protein belongs to the peptidase C1 family. Dimer of a heavy chain and a light chain cross-linked by a disulfide bond. Interacts with SRPX2. Directly interacts with SHKBP1. As to expression, expressed in the stratum spinosum of the epidermis. Weak expression is detected in the stratum granulosum.

The protein resides in the lysosome. It localises to the melanosome. The protein localises to the secreted. It is found in the extracellular space. Its subcellular location is the apical cell membrane. It carries out the reaction Hydrolysis of proteins with broad specificity for peptide bonds. Preferentially cleaves -Arg-Arg-|-Xaa bonds in small molecule substrates (thus differing from cathepsin L). In addition to being an endopeptidase, shows peptidyl-dipeptidase activity, liberating C-terminal dipeptides.. Its activity is regulated as follows. Inhibited by leupeptin. In terms of biological role, thiol protease which is believed to participate in intracellular degradation and turnover of proteins. Cleaves matrix extracellular phosphoglycoprotein MEPE. Involved in the solubilization of cross-linked TG/thyroglobulin in the thyroid follicle lumen. Has also been implicated in tumor invasion and metastasis. The protein is Cathepsin B (CTSB) of Homo sapiens (Human).